The sequence spans 585 residues: uncharacterized protein (585 aa).

6 helical membrane passes run 18–38 (FMWS…YPII), 55–75 (AAWV…ATFF), 128–148 (FFLS…AISL), 150–170 (VMFY…PFLA), 238–258 (IWSA…VALL), and 276–296 (VAFF…GFVI). Residues 18–301 (FMWSLLAMLL…LGFVINMFSQ (284 aa)) enclose the ABC transmembrane type-1 domain. In terms of domain architecture, ABC transporter spans 335 to 570 (VHFKNVSLAY…GGYYKKIYDL (236 aa)). 369-376 (GPTGSGKS) is an ATP binding site.

It belongs to the ABC transporter superfamily.

It is found in the cell membrane. This is an uncharacterized protein from Bacillus subtilis (strain 168).